The following is a 409-amino-acid chain: MPAKVSVLITVTGMDQPGVTSALFEVLAQHGVELLNVEQVVIRGRLTLGVLVSCPLDVADGTALRDDVAAAIHGVGLDVAIERSDDLPIIRQPSTHTIFVLGRPITAGAFSAVARGVAALGVNIDFIRGISDYPVTGLELRVSVPPGCVGPLQIALTKVAAEEHVDVAVEDYGLAWRTKRLIVFDVDSTLVQGEVIEMLAARAGAQGQVAAITEAAMRGELDFAESLQRRVATLAGLPATVIDDVAEQLELMPGARTTIRTLRRLGFRCGVVSGGFRRIIEPLARELMLDFVASNELEIVDGILTGRVVGPIVDRPGKAKALRDFASQYGVPMEQTVAVGDGANDIDMLGAAGLGIAFNAKPALREVADASLSHPYLDTVLFLLGVTRGEIEAADAGDCGVRRVEIPAD.

ACT domains follow at residues 8-86 (LITV…RSDD) and 102-174 (GRPI…DYGL). D185 functions as the Nucleophile in the catalytic mechanism. Mg(2+) is bound by residues D185 and D187. D187 (proton donor) is an active-site residue. Substrate contacts are provided by residues E194, R230, 273–274 (SG), and K318. Mg(2+) is bound at residue D341. N344 serves as a coordination point for substrate.

This sequence belongs to the HAD-like hydrolase superfamily. SerB family. As to quaternary structure, homodimer. The dimeric population shifts to a tetramer in the presence of L-serine, which inactivates the enzyme. The cofactor is Mg(2+). Requires Mn(2+) as cofactor.

The protein resides in the secreted. It is found in the host cytoplasm. The protein localises to the host cytosol. It catalyses the reaction O-phospho-L-serine + H2O = L-serine + phosphate. The catalysed reaction is O-phospho-D-serine + H2O = D-serine + phosphate. The enzyme catalyses O-phospho-L-seryl-[protein] + H2O = L-seryl-[protein] + phosphate. It carries out the reaction O-phospho-L-threonyl-[protein] + H2O = L-threonyl-[protein] + phosphate. It functions in the pathway amino-acid biosynthesis; L-serine biosynthesis; L-serine from 3-phospho-D-glycerate: step 3/3. With respect to regulation, clofazimine, a drug being evaluated for XDR and MDR tuberculosis, inhibits SerB2 phosphatase activity and reverses the various functional effects described above and interactions with host proteins. Is inhibited by known PSP inhibitors such as chlorpromazine, DL-AP3 and sodium orthovanadate, but not by okadaic acid. By binding to the ACT domains, amino-acids have various effects on enzyme activity: L-serine and L-glycine act as inhibitors, whereas L-lysine, L-tyrosine and L-phenylalanine are activators. High throughput screen has been performed to identify specific PSP inhibitors with activity against intracellular bacteria; the two best hits identified in this screen, clorobiocin and rosaniline, are bactericidal and kill bacteria in infected macrophages in a dose-dependent manner. In terms of biological role, catalyzes the dephosphorylation of O-phospho-L-serine into L-serine, a step in the L-serine biosynthetic pathway. Exhibits high specificity for L-phosphoserine compared to substrates like L-phosphothreonine (5% relative activity) and L-phosphotyrosine (1.7% relative activity). Functionally, in the host, induces significant cytoskeleton rearrangements through cofilin dephosphorylation and its subsequent activation, and affects the expression of genes that regulate actin dynamics. It specifically interacts with HSP90, HSP70 and HSP27 that block apoptotic pathways but not with other HSPs. Also interacts with GAPDH. It actively dephosphorylates MAP kinase p38 and NF-kappa B p65 (specifically at Ser-536) that play crucial roles in inflammatory and immune responses. This in turn leads to down-regulation of Interleukin 8, a chemotactic and inflammatory cytokine. Thus might help the pathogen to evade the host's immune response. Exogenous addition of purified SerB2 protein to human THP-1 cells (that can be differentiated into macrophage-like cells) induces microtubule rearrangements; the phosphatase activity is co-related to the elicited rearrangements, while addition of the ACT-domains alone elicits no rearrangements. This chain is Phosphoserine phosphatase SerB2, found in Mycobacterium tuberculosis (strain ATCC 25618 / H37Rv).